The following is a 578-amino-acid chain: E3 ubiquitin-protein ligase Praja-1 (578 aa).

Residues 1 to 298 (MSHQERIASQ…KVPRRRRTMA (298 aa)) form a disordered region. 2 stretches are compositionally biased toward basic and acidic residues: residues 57 to 67 (DYSRYPPREYR) and 107 to 116 (KFKDDPEKGA). Over residues 151–163 (SKQNGSSASQISS) the composition is skewed to polar residues. Thr-231 carries the phosphothreonine modification. 2 stretches are compositionally biased toward basic and acidic residues: residues 243-264 (RWRD…RGRG) and 273-290 (RYAE…ADKV). A phosphoserine mark is found at Ser-317 and Ser-319. The interval 332–397 (RSREQPQSSS…QASLEEGEIP (66 aa)) is disordered. Residues 359–373 (AGAGSLASAGSNGSG) are compositionally biased toward low complexity. Acidic residues predominate over residues 377–395 (EVQDPSLQEEEQASLEEGE). The segment at 530–571 (CPICCSEYVKGEVATELPCHHYFHKPCVSIWLQKSGTCPVCR) adopts an RING-type zinc-finger fold.

In terms of assembly, binds ubiquitin-conjugating enzymes (E2s). Binds, in vitro and in vivo, the MAGE conserved domain of MAGED1. Binds weakly Necdin, in vitro. Interacts with UBE2D2. Substrate for E2-dependent ubiquitination. In terms of tissue distribution, expressed in brain, liver, kidney. Highest levels in brain where it is found in many regions including cortical and subcortical areas and in neurons of the amygdala. Weak expression also found in testis. Also expressed in developing embryo.

The enzyme catalyses S-ubiquitinyl-[E2 ubiquitin-conjugating enzyme]-L-cysteine + [acceptor protein]-L-lysine = [E2 ubiquitin-conjugating enzyme]-L-cysteine + N(6)-ubiquitinyl-[acceptor protein]-L-lysine.. Has E2-dependent E3 ubiquitin-protein ligase activity. Ubiquitinates MAGED1 antigen leading to its subsequent degradation by proteasome. May be involved in protein sorting. The protein is E3 ubiquitin-protein ligase Praja-1 (Pja1) of Mus musculus (Mouse).